The sequence spans 779 residues: MDALMPAPQSADLRRITLANGLSVALCHDSRLKRSAASLRVAAGSHDAPLAWPGLAHFLEHLFFLGTERFQAGENLMTFVQRHGGQVNASTRERTTDFFFELPQTAFAQGLERLCDMLARPRMTVADQLREREVLHAEFIAWRGDANARDQLRLLAAVNPQHPLRGFHAGNRYSLSVPNPAFQQALQNFYQRFYQAAQMTLCLSGPQSLAELETLANTHGALFASGTKVRQHAPAPLMKHPTSLEHIDEQKHLLFACEHLPAKADEAVAFLCHWLNAAQPGGLIATLIERGLIESLNATPLYQFDGQLLLDIELNANRPSASTIKSLLLSWLRFFKTQWPALIEEYQRLEQRRLQMSGALTLAHHHCRELPAQLSDQGADALRELLEQLTSNALIGSAPVDNLDSTLAEWRLPAPNPFLESIAEDSPEAALYLRWELPSAQPTLWQMLNTRLTPLIEDARQAGVNLTFSAYGNYWQIQLNGLRAPMVAVIEHALQRLRHAAPGPLTHAGQASEPLIPVRQLLKHLADHYLISKQAQTTGDLHTVWKHSRWISFASGFCAASQLQLNTALNATPGTRQTDVPTLPAIRLGKRWSSEASSSSENAVLVFCPAPTASVEDEAAWRLLAHLLQAPFYQRLRVELQLGYAVFSGIRQIAGRTGLLFGVQSPTCSADQLFQHIEAFIGRLPALIRTADLPEQIRVLSAQFDPANMPDQQQADIHWQAYLAGHRAHHSQALQRALSNLDTHSLLATANQLIDAAGGWLIVASRPASAAVPLSLPER.

Residue H57 coordinates Zn(2+). E60 acts as the Proton acceptor in catalysis. Positions 61 and 138 each coordinate Zn(2+).

It belongs to the peptidase M16 family. The cofactor is Zn(2+).

It functions in the pathway cofactor biosynthesis; pyrroloquinoline quinone biosynthesis. Its function is as follows. Required for coenzyme pyrroloquinoline quinone (PQQ) biosynthesis. It is thought that this protein is a protease that cleaves peptides bond in a small peptide (gene pqqA), providing the glutamate and tyrosine residues which are necessary for the synthesis of PQQ. In Pseudomonas syringae pv. tomato (strain ATCC BAA-871 / DC3000), this protein is Coenzyme PQQ synthesis protein F (pqqF).